The chain runs to 69 residues: Trypsin/subtilisin inhibitor (69 aa).

An intrachain disulfide couples Cys-4 to Cys-49.

This sequence belongs to the protease inhibitor I13 (potato type I serine protease inhibitor) family.

In terms of biological role, inhibitor of trypsin, chymotrypsin, subtilisin, etc. This Amaranthus caudatus (Love-lies-bleeding) protein is Trypsin/subtilisin inhibitor.